A 401-amino-acid polypeptide reads, in one-letter code: Enolase (401 aa).

Q154 contributes to the (2R)-2-phosphoglycerate binding site. E196 acts as the Proton donor in catalysis. Residues D232, E275, and D302 each coordinate Mg(2+). K327, R356, S357, and K378 together coordinate (2R)-2-phosphoglycerate. The Proton acceptor role is filled by K327.

This sequence belongs to the enolase family. The cofactor is Mg(2+).

Its subcellular location is the cytoplasm. It is found in the secreted. The protein localises to the cell surface. The catalysed reaction is (2R)-2-phosphoglycerate = phosphoenolpyruvate + H2O. It functions in the pathway carbohydrate degradation; glycolysis; pyruvate from D-glyceraldehyde 3-phosphate: step 4/5. In terms of biological role, catalyzes the reversible conversion of 2-phosphoglycerate (2-PG) into phosphoenolpyruvate (PEP). It is essential for the degradation of carbohydrates via glycolysis. This Haloarcula marismortui (strain ATCC 43049 / DSM 3752 / JCM 8966 / VKM B-1809) (Halobacterium marismortui) protein is Enolase.